The chain runs to 625 residues: Autophagy-related protein 13b (625 aa).

2 stretches are compositionally biased toward low complexity: residues 322–332 and 455–477; these read PSVSCSPSPTR and PSGVRPSSSSSPRISFSRSSSRS. Disordered regions lie at residues 322–388, 452–527, and 544–564; these read PSVS…AVPR, FRRP…YPKK, and PPLRQDVSESSRPEICSNNNK. Residues 498-518 show a composition bias toward basic and acidic residues; it reads ITDRNSRPGSFDHRGDIHEPF.

This sequence belongs to the ATG13 family. Plant subfamily.

It localises to the cytoplasmic vesicle. Its subcellular location is the autophagosome. Functionally, involved in autophagy in a nutritional condition dependent manner. The ATG1-ATG13 protein kinase complex regulates downstream events required for autophagosome enclosure and/or vacuolar delivery. Becomes a target of autophagy under nutrient starvation. Connects autophagy to plant nutritional status. This chain is Autophagy-related protein 13b, found in Arabidopsis thaliana (Mouse-ear cress).